The following is a 459-amino-acid chain: Elongation factor 1-alpha 1 (459 aa).

Residues 5-242 form the tr-type G domain; that stretch reads KTHINIVVIG…DCIIPPQRPT (238 aa). The interval 14 to 21 is G1; sequence GHVDSGKS. A G2 region spans residues 70 to 74; it reads GITID. The interval 91 to 94 is G3; that stretch reads DAPG. The G4 stretch occupies residues 153 to 156; sequence NKMD. Residues 194-196 form a G5 region; the sequence is SGF. 2 positions are modified to 5-glutamyl glycerylphosphorylethanolamine: Glu301 and Glu374.

This sequence belongs to the TRAFAC class translation factor GTPase superfamily. Classic translation factor GTPase family. EF-Tu/EF-1A subfamily.

The protein localises to the cytoplasm. Functionally, this protein promotes the GTP-dependent binding of aminoacyl-tRNA to the A-site of ribosomes during protein biosynthesis. This Oscheius tipulae protein is Elongation factor 1-alpha 1 (eft-1).